The following is a 441-amino-acid chain: 4-alpha-glucanotransferase (441 aa).

Residues Asp-13, Asn-15, Asp-17, Val-19, and Asp-21 each contribute to the Ca(2+) site. Asp-186 serves as the catalytic Nucleophile. The active-site Proton donor is the Glu-216.

Belongs to the glycosyl hydrolase 13 family. As to quaternary structure, monomer. Ca(2+) is required as a cofactor.

The protein resides in the cytoplasm. It carries out the reaction Transfers a segment of a (1-&gt;4)-alpha-D-glucan to a new position in an acceptor, which may be glucose or a (1-&gt;4)-alpha-D-glucan.. The sequence is that of 4-alpha-glucanotransferase (mgtA) from Thermotoga maritima (strain ATCC 43589 / DSM 3109 / JCM 10099 / NBRC 100826 / MSB8).